Here is a 749-residue protein sequence, read N- to C-terminus: Catalase-peroxidase (749 aa).

Over residues M1–H12 the composition is skewed to basic and acidic residues. The tract at residues M1 to T40 is disordered. Positions D14 to E24 are enriched in polar residues. The tryptophyl-tyrosyl-methioninium (Trp-Tyr) (with M-266) cross-link spans W113–Y240. H114 serves as the catalytic Proton acceptor. Positions Y240–M266 form a cross-link, tryptophyl-tyrosyl-methioninium (Tyr-Met) (with W-113). H281 is a binding site for heme b.

This sequence belongs to the peroxidase family. Peroxidase/catalase subfamily. Homodimer or homotetramer. Requires heme b as cofactor. Formation of the three residue Trp-Tyr-Met cross-link is important for the catalase, but not the peroxidase activity of the enzyme.

The catalysed reaction is H2O2 + AH2 = A + 2 H2O. The enzyme catalyses 2 H2O2 = O2 + 2 H2O. Functionally, bifunctional enzyme with both catalase and broad-spectrum peroxidase activity. This Mycobacterium sp. (strain JLS) protein is Catalase-peroxidase.